Consider the following 217-residue polypeptide: Adenylate kinase (217 aa).

10-15 contributes to the ATP binding site; that stretch reads GAGKGT. The tract at residues 30–59 is NMP; it reads STGDMFRAAIKAGTALGMKAKEYMDAGSLV. Residues Thr31, Arg36, 57–59, 85–88, and Gln92 contribute to the AMP site; these read SLV and GFPR. Residues 126–163 are LID; sequence GRRICRQCGGTYHMVFNPPAAEAVCDKCGGELYQRSDD. Arg127 contributes to the ATP binding site. Zn(2+) is bound by residues Cys130 and Cys133. 136-137 provides a ligand contact to ATP; the sequence is TY. The Zn(2+) site is built by Cys150 and Cys153. 2 residues coordinate AMP: Arg160 and Arg171. Gln199 contacts ATP.

Belongs to the adenylate kinase family. In terms of assembly, monomer.

Its subcellular location is the cytoplasm. The catalysed reaction is AMP + ATP = 2 ADP. Its pathway is purine metabolism; AMP biosynthesis via salvage pathway; AMP from ADP: step 1/1. Catalyzes the reversible transfer of the terminal phosphate group between ATP and AMP. Plays an important role in cellular energy homeostasis and in adenine nucleotide metabolism. This chain is Adenylate kinase, found in Desulfitobacterium hafniense (strain DSM 10664 / DCB-2).